We begin with the raw amino-acid sequence, 261 residues long: MLYYPHIDPVAFRLGPLKVHWYGLMYLVGFAMAWGLALYRARDPKRHWTAQQVGDLIFYGALGLIIGGRLGYMLFYDFSNFIANPLTLFQVWRGGMSFHGGLIGVIVTTWIFSRRTHKRWMDVTDFVVPLVPLGLAAGRIGNFINGELWGRVTTVPWGMVFPNAGPLPRHPSQLYEFLLEGVLLFIVIWWFSAKLRPRFAVSSLFLLCYGLFRFTAEFFRQPDPQLGFVAFGWLTRGQELSLPMIIIGGFALWWAYRHKER.

7 helical membrane passes run 19-39 (VHWY…LALY), 56-76 (LIFY…MLFY), 92-112 (WRGG…TWIF), 126-146 (FVVP…FING), 173-193 (QLYE…WFSA), 199-219 (FAVS…AEFF), and 227-247 (GFVA…MIII). Residue R139 coordinates a 1,2-diacyl-sn-glycero-3-phospho-(1'-sn-glycerol).

It belongs to the Lgt family.

It is found in the cell inner membrane. It carries out the reaction L-cysteinyl-[prolipoprotein] + a 1,2-diacyl-sn-glycero-3-phospho-(1'-sn-glycerol) = an S-1,2-diacyl-sn-glyceryl-L-cysteinyl-[prolipoprotein] + sn-glycerol 1-phosphate + H(+). Its pathway is protein modification; lipoprotein biosynthesis (diacylglyceryl transfer). Its function is as follows. Catalyzes the transfer of the diacylglyceryl group from phosphatidylglycerol to the sulfhydryl group of the N-terminal cysteine of a prolipoprotein, the first step in the formation of mature lipoproteins. The chain is Phosphatidylglycerol--prolipoprotein diacylglyceryl transferase from Coxiella burnetii (strain CbuK_Q154) (Coxiella burnetii (strain Q154)).